The sequence spans 478 residues: Adenosylhomocysteinase (478 aa).

Thr-56, Asp-139, and Glu-201 together coordinate substrate. Residue 202–204 (TTT) coordinates NAD(+). Residues Lys-231 and Asp-235 each coordinate substrate. NAD(+) contacts are provided by residues Asn-236, 265-270 (GYGDVG), Glu-288, Asn-323, 344-346 (IGH), and Asn-392.

The protein belongs to the adenosylhomocysteinase family. Requires NAD(+) as cofactor.

The protein localises to the cytoplasm. The enzyme catalyses S-adenosyl-L-homocysteine + H2O = L-homocysteine + adenosine. It functions in the pathway amino-acid biosynthesis; L-homocysteine biosynthesis; L-homocysteine from S-adenosyl-L-homocysteine: step 1/1. Functionally, may play a key role in the regulation of the intracellular concentration of adenosylhomocysteine. This Corynebacterium diphtheriae (strain ATCC 700971 / NCTC 13129 / Biotype gravis) protein is Adenosylhomocysteinase.